Here is an 831-residue protein sequence, read N- to C-terminus: Leucine--tRNA ligase (831 aa).

Residues 36-46 carry the 'HIGH' region motif; it reads PYPSGKLHIGH. A 'KMSKS' region motif is present at residues 607–611; sequence KMSKS. ATP is bound at residue Lys610.

It belongs to the class-I aminoacyl-tRNA synthetase family.

The protein resides in the cytoplasm. The enzyme catalyses tRNA(Leu) + L-leucine + ATP = L-leucyl-tRNA(Leu) + AMP + diphosphate. This is Leucine--tRNA ligase from Neorickettsia sennetsu (strain ATCC VR-367 / Miyayama) (Ehrlichia sennetsu).